The following is a 95-amino-acid chain: Toxin Tbo-IT2 (95 aa).

An N-terminal signal peptide occupies residues 1 to 23 (MTMKTLCLSLIVIGVLILVAVKA). Residues 24-53 (EDYVNINSLEEAPEENVNINNLEETPEESR) constitute a propeptide that is removed on maturation. 5 cysteine pairs are disulfide-bonded: cysteine 54–cysteine 68, cysteine 61–cysteine 73, cysteine 67–cysteine 84, cysteine 70–cysteine 92, and cysteine 75–cysteine 82. A Cysteine amide modification is found at cysteine 92.

Belongs to the neurotoxin 02 (plectoxin) family. 02 (plectoxin) subfamily. In terms of tissue distribution, expressed by the venom gland.

It localises to the secreted. This recombinant (non-amidated) toxin shows insecticidal activity on larvae of the housefly Musca domestica and has no activity on a panel of expressed neuronal receptors and ion channels. The polypeptide is Toxin Tbo-IT2 (Tibellus oblongus (Oblong running crab spider)).